A 417-amino-acid chain; its full sequence is Sterile alpha motif domain-containing protein 14 (417 aa).

Disordered regions lie at residues 37–299 (LLAK…WQEA) and 388–417 (AAAEKERKAQEKAARQREKLRRREQEAKKS). Residues 40-49 (KGRRHRPSRS) are compositionally biased toward basic residues. Phosphoserine is present on residues S84 and S108. The segment covering 135–153 (AAASCSPPRSAPSSDSSPS) has biased composition (low complexity). The span at 160–173 (RAEPHSEDDSRDAS) shows a compositional bias: basic and acidic residues. 2 positions are modified to phosphoserine: S173 and S179. Low complexity-rich tracts occupy residues 244-260 (SGKGSASSGSTTSPTCS) and 276-295 (STLSDDSTPPSSSPKIPSGP). S279 bears the Phosphoserine mark. The residue at position 283 (T283) is a Phosphothreonine. One can recognise an SAM domain in the interval 326–389 (WTSQQVGQWL…KRKLKEMAAA (64 aa)). Residues 377 to 417 (ALVKRKLKEMAAAAEKERKAQEKAARQREKLRRREQEAKKS) adopt a coiled-coil conformation. Residues 390–417 (AEKERKAQEKAARQREKLRRREQEAKKS) are compositionally biased toward basic and acidic residues.

This is Sterile alpha motif domain-containing protein 14 (SAMD14) from Homo sapiens (Human).